The primary structure comprises 601 residues: MPESNAHIRNFSIIAHIDHGKSTLADRLLEHTGTVSERHAQAQFLDNMELERERGITIKAQTVRMRYRARDGVDYELNLIDTPGHVDFAYEVSRSLAACEGAILVVDATQGVEAQTLANVYQALDHDLEIIPVINKVDLPSADVPGVRAEIEEVIGLDASEAVPASAKEGIGIGDILEQIVRKVPPPKGDPEAPLKAIIFDSWYDSYRGVVMLVRVFEGTLAPKQKIQLVSNRKKFEVQELGIFAPFAKPVQRLTAGEVGIVVANVKEVQDAKVGDTVTEADRPTEDPFPGFKVVKPMVFSGVFPIEAKDYEQLRDALEKLRLNDSAFTFEPETSTALGFGFRCGYLGLLHMEIVQERLEREYNLSLITTAPSVVYRVTDTQGEVVEIDNPAKLPPVQRIAKLEEPHLTCHIHARTDDVGAILQLCQDRRGVQRDLKYLGTKRVQITYDIPLAEVVFDFFDKLKSVSRGYASLDYELKGYEEADLVKLDILINGEPVDALSVIVHRERAYHRGRELCQKLREVIPKQMYEVAIQAAIGAKIIARETVKAFRKDVIAKCYGGDISRKRKLLERQKEGKKRMKQVGSVEIPQEAFLAVLKVEE.

A tr-type G domain is found at 6–188 (AHIRNFSIIA…QIVRKVPPPK (183 aa)). Residues 18 to 23 (DHGKST) and 135 to 138 (NKVD) each bind GTP.

The protein belongs to the TRAFAC class translation factor GTPase superfamily. Classic translation factor GTPase family. LepA subfamily.

Its subcellular location is the cell inner membrane. The enzyme catalyses GTP + H2O = GDP + phosphate + H(+). In terms of biological role, required for accurate and efficient protein synthesis under certain stress conditions. May act as a fidelity factor of the translation reaction, by catalyzing a one-codon backward translocation of tRNAs on improperly translocated ribosomes. Back-translocation proceeds from a post-translocation (POST) complex to a pre-translocation (PRE) complex, thus giving elongation factor G a second chance to translocate the tRNAs correctly. Binds to ribosomes in a GTP-dependent manner. The sequence is that of Elongation factor 4 from Anaeromyxobacter sp. (strain Fw109-5).